The following is a 186-amino-acid chain: ATP synthase subunit b, chloroplastic (186 aa).

The helical transmembrane segment at 27-43 (IFETNILNLAVVLGILL) threads the bilayer.

Belongs to the ATPase B chain family. F-type ATPases have 2 components, F(1) - the catalytic core - and F(0) - the membrane proton channel. F(1) has five subunits: alpha(3), beta(3), gamma(1), delta(1), epsilon(1). F(0) has four main subunits: a(1), b(1), b'(1) and c(10-14). The alpha and beta chains form an alternating ring which encloses part of the gamma chain. F(1) is attached to F(0) by a central stalk formed by the gamma and epsilon chains, while a peripheral stalk is formed by the delta, b and b' chains.

The protein localises to the plastid. It localises to the chloroplast thylakoid membrane. Its function is as follows. F(1)F(0) ATP synthase produces ATP from ADP in the presence of a proton or sodium gradient. F-type ATPases consist of two structural domains, F(1) containing the extramembraneous catalytic core and F(0) containing the membrane proton channel, linked together by a central stalk and a peripheral stalk. During catalysis, ATP synthesis in the catalytic domain of F(1) is coupled via a rotary mechanism of the central stalk subunits to proton translocation. In terms of biological role, component of the F(0) channel, it forms part of the peripheral stalk, linking F(1) to F(0). The protein is ATP synthase subunit b, chloroplastic of Mesostigma viride (Green alga).